The chain runs to 743 residues: Putative pentatricopeptide repeat-containing protein At1g68930 (743 aa).

15 PPR repeats span residues 40-70 (ETFL…IPQP), 71-101 (NLFS…LPDR), 102-132 (DGVT…MMRD), 138-172 (TRVT…GFES), 173-203 (YLLV…LDDR), 204-233 (NTVM…GMEK), 234-268 (DSVS…GLKM), 269-303 (DQYP…NFQD), 304-334 (HIYV…MKQK), 335-369 (NVVS…GIDP), 370-404 (DHYT…GLIH), 405-435 (YVTV…MNVR), 436-470 (DAVS…GLKP), 471-506 (DGVT…GIVP), and 507-537 (SIGH…MPFP). The segment at 542–617 (GWTTLLSACR…EPGQSWIKWK (76 aa)) is type E motif. A type E(+) motif region spans residues 618–648 (GKLHSFSADDESSPYLDQIYAKLEELNNKII). A type DYW motif region spans residues 649 to 743 (DNGYKPDTSF…DGTCSCGDFW (95 aa)).

This sequence belongs to the PPR family. PCMP-H subfamily.

The sequence is that of Putative pentatricopeptide repeat-containing protein At1g68930 (PCMP-H22) from Arabidopsis thaliana (Mouse-ear cress).